A 1071-amino-acid polypeptide reads, in one-letter code: Myosin IF heavy chain (1071 aa).

Residues 40–736 form the Myosin motor domain; the sequence is VGLTDMCFLE…TLFHFEELRQ (697 aa). 134-141 is an ATP binding site; the sequence is GESGSGKT. The tract at residues 610-632 is actin-binding; the sequence is INDLIGKLNTCQPHYIRCIKSNE. The region spanning 739-768 is the IQ domain; it reads LPSIVITIQRVWRGYKVRKWYKQELQRLRE. The 200-residue stretch at 870–1069 folds into the TH1 domain; it reads SRKKEWDCRR…KGNTAIVYYN (200 aa).

The protein belongs to the TRAFAC class myosin-kinesin ATPase superfamily. Myosin family. Myosin I heavy chain is single-headed. Dimer of a heavy and a light chain. Inability to self-assemble into filaments.

Its function is as follows. Myosin is a protein that binds to actin and has ATPase activity that is activated by actin. The polypeptide is Myosin IF heavy chain (myoF) (Dictyostelium discoideum (Social amoeba)).